A 315-amino-acid chain; its full sequence is WD repeat domain-containing protein 83 (315 aa).

WD repeat units lie at residues 23–62 (CSQGAVRAVRFNVDGNYCLTCGSDKTLKLWNPLRGTLLRT), 65–104 (GHGYEVLDAAGSFDNSHLCSGGGDKTVVLWDVATGQVVRK), 107–146 (GHAGKVNTVQFNEEATVILSGSIDSSVRCWDCRSRKPEPV), 151–188 (EARDGISSVKVSDHEILAGSVDGRVRRYDLRMGQVSSD), 190–228 (VGSPITCTCFSRDGQCTLISSLDSTLRLLDKDTGELLGE), 231–272 (GHKN…LALA), and 275–313 (VGSNVVQSLAYHPTEPCLLTAMGGSIQYWREETYEAEGG).

It belongs to the WD repeat MORG1 family. Interacts with EGLN3/PHD3. Interacts with ERK signaling proteins MAP2K1/MEK1, MAP2K2/MEK2, LAMTOR3, ARAF/Raf-1, MAPK1/ERK2 and MAPK3/ERK1. Identified in the spliceosome C complex. Interacts with PARD6B and CRB3. Interacts strongly with GTP-bound RRAGA but not with inactive GDP-bound. Interacts with p62/SQSTM1. Ubiquitous.

The protein resides in the cytoplasm. Its subcellular location is the lysosome. It is found in the nucleus. Its function is as follows. Molecular scaffold protein for various multimeric protein complexes. Acts as a module in the assembly of a multicomponent scaffold for the ERK pathway, linking ERK responses to specific agonists. At low concentrations it enhances ERK activation, whereas high concentrations lead to the inhibition of ERK activation. Also involved in response to hypoxia by acting as a negative regulator of HIF1A/HIF-1-alpha via its interaction with EGLN3/PHD3. May promote degradation of HIF1A. May act by recruiting signaling complexes to a specific upstream activator. May also be involved in pre-mRNA splicing. Participates in tight junction development by regulating apico-basal polarity, a key step in tissue development and organization. Mechanistically, regulates the translocation of PAR6-aPKC from the cytoplasm to the apical surface by acting as an adapter between PARD6B AND CRB3. Also acts as a negative regulator of mTORC1 under nutrient-rich conditions by binding to the active Rag GTPases to inhibit mTORC1 localization to the lysosome and phosphorylation of downstream targets. This facilitates constitutive basal autophagy during nutrient availability. This is WD repeat domain-containing protein 83 (Wdr83) from Mus musculus (Mouse).